The primary structure comprises 185 residues: NOP protein chaperone 1 (185 aa).

3 positions are modified to phosphoserine: Ser-34, Ser-66, and Ser-177. Positions 121–185 (SRSDSKEEDS…DSPASKKKKQ (65 aa)) are disordered.

Interacts with NOP58, RUVBL1 and RUVBL2; the interactions are direct and NOPCHAP1 bridges the association of NOP58 with RUVBL1:RUVBL2 even in absence of snoRNAs. The interactions with RUVBL1 and RUVBL2 are disrupted upon ATP binding.

It is found in the nucleus. In terms of biological role, client-loading PAQosome/R2TP complex cofactor that selects NOP58 to promote box C/D small nucleolar ribonucleoprotein (snoRNP) assembly. Acts as a bridge between NOP58 and the R2TP complex via RUVBL1:RUVBL2. In Mus musculus (Mouse), this protein is NOP protein chaperone 1.